The primary structure comprises 395 residues: S-adenosylmethionine synthase (395 aa).

E10 serves as a coordination point for Mg(2+). Residue H16 participates in ATP binding. E44 lines the K(+) pocket. Residues E57 and Q100 each coordinate L-methionine. ATP-binding positions include 168–170 (DGK), 236–239 (SGRF), 253–254 (RK), A270, K274, and K278. K278 is an L-methionine binding site.

Belongs to the AdoMet synthase family. As to quaternary structure, homotetramer. Mn(2+) serves as cofactor. The cofactor is Mg(2+). Co(2+) is required as a cofactor. It depends on K(+) as a cofactor.

It is found in the cytoplasm. It carries out the reaction L-methionine + ATP + H2O = S-adenosyl-L-methionine + phosphate + diphosphate. It functions in the pathway amino-acid biosynthesis; S-adenosyl-L-methionine biosynthesis; S-adenosyl-L-methionine from L-methionine: step 1/1. In terms of biological role, catalyzes the formation of S-adenosylmethionine from methionine and ATP. The reaction comprises two steps that are both catalyzed by the same enzyme: formation of S-adenosylmethionine (AdoMet) and triphosphate, and subsequent hydrolysis of the triphosphate. The chain is S-adenosylmethionine synthase (METK) from Populus deltoides (Eastern poplar).